A 415-amino-acid chain; its full sequence is Esterase FrsA (415 aa).

It belongs to the FrsA family.

The catalysed reaction is a carboxylic ester + H2O = an alcohol + a carboxylate + H(+). Functionally, catalyzes the hydrolysis of esters. The polypeptide is Esterase FrsA (Vibrio parahaemolyticus serotype O3:K6 (strain RIMD 2210633)).